The primary structure comprises 569 residues: Ribosome-inactivating protein SNAI' (569 aa).

Positions 1–28 (MKVVATILYLVVLAICGLGIHGAHPTHS) are cleaved as a signal peptide. Residue N40 is glycosylated (N-linked (GlcNAc...) asparagine). E201 is an active-site residue. Intrachain disulfides connect C286–C311, C328–C347, and C369–C381. Ricin B-type lectin domains lie at 315-435 (EEVT…WIVG) and 437-565 (VEPL…WIAS). A 1-alpha repeat occupies 325–365 (DGFCAEVKNGDEKDGTPVQLSSCGEQSNQQWTFSTDGTIQS). The stretch at 366-401 (LGKCLTTSSSVMIYNCKVVPPESTKWVVSIDGTITN) is one 1-beta repeat. One copy of the 1-gamma repeat lies at 404-436 (SGLVLTAPKAAEGTLVSLEKNVHAARQGWIVGN). The 2-alpha repeat unit spans residues 448–488 (EQMCLETNPGNNDVSLGDCSVKSASKVDQKWALYGDGTIRV). 2 cysteine pairs are disulfide-bonded: C451/C466 and C495/C512. A 2-beta repeat occupies 492 to 530 (RSLCVTSEGKSSNEPIIILKCLGWANQRWVFNTDGTISN). One copy of the 2-gamma repeat lies at 533-566 (SKLVMHVDQNDVPLRKIILSHPSGTSNQQWIAST).

It in the N-terminal section; belongs to the ribosome-inactivating protein family. Type 2 RIP subfamily. Disulfide-linked dimer of A and B chains.

It catalyses the reaction Endohydrolysis of the N-glycosidic bond at one specific adenosine on the 28S rRNA.. In terms of biological role, the A chain is responsible for inhibiting protein synthesis through the catalytic inactivation of 60S ribosomal subunits by removing adenine from position 4,324 of 28S rRNA. The B chain binds to cell receptors and probably facilitates the entry into the cell of the A chain; B chains are also responsible for cell agglutination (lectin activity). Agglutination is inhibited by Neu5Ac(alpha2,6)lactose, and N-linked glycoproteins such as fetuin and orosomucoid. This is Ribosome-inactivating protein SNAI' from Sambucus nigra (European elder).